The chain runs to 343 residues: RNA-binding protein 43 (343 aa).

Residues R15–E90 form the RRM domain.

This Mus musculus (Mouse) protein is RNA-binding protein 43 (Rbm43).